Here is a 444-residue protein sequence, read N- to C-terminus: Argininosuccinate synthase (444 aa).

Residues 17–25 and A43 contribute to the ATP site; that span reads AFSGGLDTS. L-citrulline is bound at residue Y99. ATP contacts are provided by G129 and T131. The L-aspartate site is built by T131, N135, and D136. L-citrulline is bound at residue N135. An ATP-binding site is contributed by D136. R139 and S192 together coordinate L-citrulline. D194 lines the ATP pocket. L-citrulline contacts are provided by T201, E203, and E280.

The protein belongs to the argininosuccinate synthase family. Type 2 subfamily. As to quaternary structure, homotetramer.

Its subcellular location is the cytoplasm. The catalysed reaction is L-citrulline + L-aspartate + ATP = 2-(N(omega)-L-arginino)succinate + AMP + diphosphate + H(+). The protein operates within amino-acid biosynthesis; L-arginine biosynthesis; L-arginine from L-ornithine and carbamoyl phosphate: step 2/3. The sequence is that of Argininosuccinate synthase from Burkholderia lata (strain ATCC 17760 / DSM 23089 / LMG 22485 / NCIMB 9086 / R18194 / 383).